Here is an 84-residue protein sequence, read N- to C-terminus: uncharacterized protein (84 aa).

The protein belongs to the chlamydial CPn_0710/CT_666/TC_0037 family.

This is an uncharacterized protein from Chlamydia pneumoniae (Chlamydophila pneumoniae).